Here is a 503-residue protein sequence, read N- to C-terminus: GMP synthase [glutamine-hydrolyzing] (503 aa).

Positions methionine 1–aspartate 178 constitute a Glutamine amidotransferase type-1 domain. The Nucleophile role is filled by cysteine 60. Residues histidine 152 and glutamate 154 contribute to the active site. Residues tryptophan 179 to arginine 377 enclose the GMPS ATP-PPase domain. Position 206–212 (serine 206–alanine 212) interacts with ATP.

In terms of assembly, homodimer.

The catalysed reaction is XMP + L-glutamine + ATP + H2O = GMP + L-glutamate + AMP + diphosphate + 2 H(+). It functions in the pathway purine metabolism; GMP biosynthesis; GMP from XMP (L-Gln route): step 1/1. Functionally, catalyzes the synthesis of GMP from XMP. The chain is GMP synthase [glutamine-hydrolyzing] from Leifsonia xyli subsp. xyli (strain CTCB07).